We begin with the raw amino-acid sequence, 277 residues long: MSGWGMPRPVFIVSDHTGLTAENIARALLTHFPGQPLRYLRRPFTSDAQAAQAVVSEVEALAASGERPLIFTTTTQPDVLEALQTAPAQVFDLLTENLRLLEGEFAEPPQLGAGGHHDMQDSEAYLSRMEALDFALATDDGIGDKQYGLSDVILVGVSRAGKTPTSLFLALQHGIRASNYPLAEDDFEREGLPAPLEQYRSKLFGLTIDPRRLHAIRTQRKPGSKYASIEQCEYEVRRASALFARLGLPVKDTTSASVEEIAAGVLALLRQSGRLEG.

156–163 (GVSRAGKT) lines the ADP pocket.

The protein belongs to the pyruvate, phosphate/water dikinase regulatory protein family. PSRP subfamily.

It catalyses the reaction [pyruvate, water dikinase] + ADP = [pyruvate, water dikinase]-phosphate + AMP + H(+). It carries out the reaction [pyruvate, water dikinase]-phosphate + phosphate + H(+) = [pyruvate, water dikinase] + diphosphate. In terms of biological role, bifunctional serine/threonine kinase and phosphorylase involved in the regulation of the phosphoenolpyruvate synthase (PEPS) by catalyzing its phosphorylation/dephosphorylation. This is Putative phosphoenolpyruvate synthase regulatory protein from Deinococcus radiodurans (strain ATCC 13939 / DSM 20539 / JCM 16871 / CCUG 27074 / LMG 4051 / NBRC 15346 / NCIMB 9279 / VKM B-1422 / R1).